Reading from the N-terminus, the 121-residue chain is Alpha-endosulfine (121 aa).

Residues 1 to 53 form a disordered region; sequence MSQKQEEENPAEETGEEKQDTQEKEGILPEKAEEAKLKAKYPSLGQKPGGSDF. Residue Ser2 is modified to N-acetylserine. Ser2 carries the phosphoserine modification. The segment covering 16–37 has biased composition (basic and acidic residues); the sequence is EEKQDTQEKEGILPEKAEEAKL. The residue at position 21 (Thr21) is a Phosphothreonine. Phosphoserine is present on Ser43. Ser67 is modified (phosphoserine; by GWL). The tract at residues 79-121 is disordered; that stretch reads NKQLPSAGPDKNLVTGDHIPTPQDLPQRKSSLVTSKLAGGQVE. Phosphoserine; by PKA is present on Ser109.

The protein belongs to the endosulfine family. As to quaternary structure, interacts (when phosphorylated at Ser-67) with PPP2R2D. Interacts with ABCC8. Interacts with SNCA; interaction is disrupted when phosphorylated at Ser-109. Post-translationally, phosphorylation at Ser-67 by GWL during mitosis is essential for interaction with PPP2R2D (PR55-delta) and subsequent inactivation of PP2A. Phosphorylated by PKA.

It localises to the cytoplasm. In terms of biological role, protein phosphatase inhibitor that specifically inhibits protein phosphatase 2A (PP2A) during mitosis. When phosphorylated at Ser-67 during mitosis, specifically interacts with PPP2R2D (PR55-delta) and inhibits its activity, leading to inactivation of PP2A, an essential condition to keep cyclin-B1-CDK1 activity high during M phase. Also acts as a stimulator of insulin secretion by interacting with sulfonylurea receptor (ABCC8), thereby preventing sulfonylurea from binding to its receptor and reducing K(ATP) channel currents. The chain is Alpha-endosulfine (ENSA) from Bos taurus (Bovine).